Consider the following 710-residue polypeptide: Polyribonucleotide nucleotidyltransferase (710 aa).

Residues Asp491 and Asp497 each contribute to the Mg(2+) site. Positions Pro559 to Ile618 constitute a KH domain. An S1 motif domain is found at Gly628–Lys696.

Belongs to the polyribonucleotide nucleotidyltransferase family. Requires Mg(2+) as cofactor.

The protein localises to the cytoplasm. It carries out the reaction RNA(n+1) + phosphate = RNA(n) + a ribonucleoside 5'-diphosphate. Functionally, involved in mRNA degradation. Catalyzes the phosphorolysis of single-stranded polyribonucleotides processively in the 3'- to 5'-direction. The polypeptide is Polyribonucleotide nucleotidyltransferase (Herminiimonas arsenicoxydans).